Reading from the N-terminus, the 497-residue chain is Xylooligosaccharide oxidase (497 aa).

The first 16 residues, 1–16 (MHLLPLTVSATAVVSA), serve as a signal peptide directing secretion. Cys-30 and Cys-79 are oxidised to a cystine. Residues Asn-42 and Asn-117 are each glycosylated (N-linked (GlcNAc...) asparagine). The FAD-binding PCMH-type domain maps to 57 to 230 (LPYTPAAIAK…ASFRFKTFAA (174 aa)). The 6-(S-cysteinyl)-8alpha-(pros-histidyl)-FAD (His-Cys) cross-link spans 94–155 (HSYASFGLGG…GKRAFSHGTC (62 aa)). Position 154 (Thr-154) interacts with substrate. N-linked (GlcNAc...) asparagine glycans are attached at residues Asn-192, Asn-233, and Asn-245. A substrate-binding site is contributed by Arg-272. Residues Asn-289 and Asn-307 are each glycosylated (N-linked (GlcNAc...) asparagine). Substrate contacts are provided by Glu-412 and Tyr-451.

This sequence belongs to the oxygen-dependent FAD-linked oxidoreductase family. It depends on FAD as a cofactor. In terms of processing, the FAD cofactor is bound via a bicovalent 6-S-cysteinyl, 8alpha-N1-histidyl FAD linkage.

The protein localises to the secreted. It catalyses the reaction D-xylobiose + O2 = D-xylobiono-1,5-lactone + H2O2. The enzyme catalyses D-xylotriose + O2 = D-xylotriono-1,5-lactone + H2O2. The catalysed reaction is D-xylotetraose + O2 = D-xylotetraono-1,5-lactone + H2O2. In terms of biological role, catalyzes the selective oxidation of C1 hydroxyl moieties on mono-, oligo- and polysaccharides with concomitant reduction of molecular oxygen to hydrogen peroxide. This results in the formation of the corresponding lactones, which typically undergo spontaneous hydrolysis. Xylooligosaccharide oxidase is able to oxidize a variety of substrates including D-xylose, D-cellobiose, lactose and arabinose. The enzyme acts primarily on xylooligosaccharides, indicating that it prefers pentose-based oligosaccharides over hexose-based oligosaccharides. The sequence is that of Xylooligosaccharide oxidase from Thermothelomyces thermophilus (strain ATCC 42464 / BCRC 31852 / DSM 1799) (Sporotrichum thermophile).